The chain runs to 357 residues: MQNDIHRHLNPALQKIGAYVVEGGQEAPVKLNQNESPFDVPMWLKEAITREFVREPWNRYPDILPYRGIEAYAEFLGVPAGRVIMGNGSNELLYTIFMACLGPGRRILIPEPSFSLYEKIALLMQADIVSVPMRRGLDFDADLILERAKAEAVDLIVLSTPNNPTGKSLSPDDIRRIATESGAIVLVDEAYIEFSRHPSALPLVDELPNVVILRTMSKALALAGMRIGFAIAPEALMAELTKPKIPFASNRLAEITLRHVLANYSIVKDSVSYILDERERMYSELEGMDGLQPFMSDTNFLIIRVADPRAVFQHLRGEGILVRNVSGYPLMEGCLRCNIGLRDENRRLLDGLSRALR.

An N6-(pyridoxal phosphate)lysine modification is found at Lys-218.

The protein belongs to the class-II pyridoxal-phosphate-dependent aminotransferase family. Histidinol-phosphate aminotransferase subfamily. In terms of assembly, homodimer. The cofactor is pyridoxal 5'-phosphate.

It catalyses the reaction L-histidinol phosphate + 2-oxoglutarate = 3-(imidazol-4-yl)-2-oxopropyl phosphate + L-glutamate. Its pathway is amino-acid biosynthesis; L-histidine biosynthesis; L-histidine from 5-phospho-alpha-D-ribose 1-diphosphate: step 7/9. The sequence is that of Histidinol-phosphate aminotransferase from Chlorobium luteolum (strain DSM 273 / BCRC 81028 / 2530) (Pelodictyon luteolum).